The following is a 189-amino-acid chain: 3-hydroxyanthranilate 3,4-dioxygenase (189 aa).

R49 provides a ligand contact to O2. Fe cation is bound by residues H53, E59, and H97. E59 lines the substrate pocket. R101 and E112 together coordinate substrate. C127, C130, C165, and C168 together coordinate Fe cation.

It belongs to the 3-HAO family. Homodimer. Fe(2+) serves as cofactor.

It carries out the reaction 3-hydroxyanthranilate + O2 = (2Z,4Z)-2-amino-3-carboxymuconate 6-semialdehyde. Its pathway is cofactor biosynthesis; NAD(+) biosynthesis; quinolinate from L-kynurenine: step 3/3. Its function is as follows. Catalyzes the oxidative ring opening of 3-hydroxyanthranilate to 2-amino-3-carboxymuconate semialdehyde, which spontaneously cyclizes to quinolinate. In Cupriavidus pinatubonensis (strain JMP 134 / LMG 1197) (Cupriavidus necator (strain JMP 134)), this protein is 3-hydroxyanthranilate 3,4-dioxygenase.